Consider the following 495-residue polypeptide: Mothers against decapentaplegic homolog 6 (495 aa).

A compositionally biased stretch (basic residues) spans 1-15 (MFRSKRSGLVRRLWR). Disordered stretches follow at residues 1-115 (MFRS…PGWL) and 133-161 (AAGA…RSRE). Residues Arg-74 and Arg-81 each carry the dimethylated arginine; alternate modification. An omega-N-methylarginine; alternate mark is found at Arg-74 and Arg-81. The MH1 domain occupies 149–276 (PEPEEGGGPR…FSRLCGPESP (128 aa)). Lys-174 participates in a covalent cross-link: Glycyl lysine isopeptide (Lys-Gly) (interchain with G-Cter in ubiquitin). Zn(2+)-binding residues include Cys-206, Cys-248, Cys-261, and His-266. One can recognise an MH2 domain in the interval 332–495 (WCSVAYWEHR…WLEILLNNHR (164 aa)). Residue Ser-436 is modified to Phosphoserine; by PRKX; in vitro.

This sequence belongs to the dwarfin/SMAD family. As to quaternary structure, interacts with NEDD4L. Interacts with WWP1. Interacts with STAMBP and PRKX. Interacts with RNF111 and AXIN1. Interacts with TGF-beta type I receptor superfamily members, including ACVR1B, BMPR1B and TGFBR1. In response to BMP2 treatment, interacts with SMAD1; this interaction may inhibit SMAD1-binding to SMAD4. Interacts with HOXC8 and HOXC9. Interacts with PELI1; this interaction interferes with PELI1 complex formation with TRAF6, IRAK1, IRAK4 and MYD88 in response to IL1B and hence negatively regulates IL1R-TLR signaling. Interacts with TSC22D1/TSC-22. Monoubiquitinated at Lys-174 by the E2/E3 hybrid ubiquitin-protein ligase UBE2O, leading to reduced binding affinity for the activated BMP type I receptor ACVR1/ALK2, thereby enhancing BMP7 and regulating adipocyte differentiation. Ubiquitinated by WWP1. Ubiquitinated by ARK2C, promoting proteasomal degradation, leading to enhance the BMP-Smad signaling. Post-translationally, arginine methylation by PRMT1, which is recruited by BMPR2, initiates BMP-Induced signaling and induces dissociation from the BMPR1B receptor at the cell surface leading to derepress downstream Smad1/Smad5 signaling. In terms of processing, phosphorylated by BMP type 1 receptor kinase and by PRKX. As to expression, ubiquitous in various organs, with higher levels in lung.

It localises to the nucleus. Transforming growth factor-beta superfamily receptors signaling occurs through the Smad family of intracellular mediators. SMAD6 is an inhibitory Smad (i-Smad) that negatively regulates signaling downstream of type I transforming growth factor-beta. Acts as a mediator of TGF-beta and BMP anti-inflammatory activities. Suppresses IL1R-TLR signaling through its direct interaction with PEL1, preventing NF-kappa-B activation, nuclear transport and NF-kappa-B-mediated expression of pro-inflammatory genes. Blocks the BMP-SMAD1 signaling pathway by competing with SMAD4 for receptor-activated SMAD1-binding. Binds to regulatory elements in target promoter regions. This Mus musculus (Mouse) protein is Mothers against decapentaplegic homolog 6 (Smad6).